We begin with the raw amino-acid sequence, 785 residues long: Putative lipase C4A8.10 (785 aa).

Disordered regions lie at residues 29 to 99 (HSAT…SSDF) and 115 to 140 (NTNAINIPEQTRGVSHTSSSPSVGTS). Over residues 32-41 (TSSTTVPPTV) the composition is skewed to low complexity. Positions 47-58 (TKKESGSIEDRA) are enriched in basic and acidic residues. Residues 63–86 (MTISSGENISKQISENNSSTNPKH) are compositionally biased toward polar residues. 2 stretches are compositionally biased toward low complexity: residues 89–99 (SESSPLLSSDF) and 127–140 (GVSHTSSSPSVGTS). The active-site Charge relay system is the serine 390.

The protein belongs to the putative lipase ROG1 family.

The protein is Putative lipase C4A8.10 of Schizosaccharomyces pombe (strain 972 / ATCC 24843) (Fission yeast).